Reading from the N-terminus, the 270-residue chain is Phosphatidylglycerol--prolipoprotein diacylglyceryl transferase (270 aa).

4 helical membrane passes run 19 to 39 (FPVYWYGVIIGTGVLLGLWLA), 54 to 74 (IDLVLIAVPIAILFARMYYVI), 92 to 112 (QGGLAIHGGLIGAVITGILFA), and 116 to 136 (GLSFWKLADIAAPSILLGQAI). An a 1,2-diacyl-sn-glycero-3-phospho-(1'-sn-glycerol)-binding site is contributed by arginine 138. A run of 3 helical transmembrane segments spans residues 178-198 (HPTFLYESLWNFAGVILLLAL), 206-226 (GELFFTYLIWYSVGRFFVEGL), and 236-256 (LRIAQVMSIGIVVISIIFIIV).

Belongs to the Lgt family.

The protein resides in the cell membrane. It catalyses the reaction L-cysteinyl-[prolipoprotein] + a 1,2-diacyl-sn-glycero-3-phospho-(1'-sn-glycerol) = an S-1,2-diacyl-sn-glyceryl-L-cysteinyl-[prolipoprotein] + sn-glycerol 1-phosphate + H(+). It functions in the pathway protein modification; lipoprotein biosynthesis (diacylglyceryl transfer). Catalyzes the transfer of the diacylglyceryl group from phosphatidylglycerol to the sulfhydryl group of the N-terminal cysteine of a prolipoprotein, the first step in the formation of mature lipoproteins. The polypeptide is Phosphatidylglycerol--prolipoprotein diacylglyceryl transferase (Bacillus mycoides (strain KBAB4) (Bacillus weihenstephanensis)).